Here is a 321-residue protein sequence, read N- to C-terminus: Lipoyl synthase (321 aa).

Residues C68, C73, C79, C94, C98, C101, and S308 each contribute to the [4Fe-4S] cluster site. Residues 80–297 (FNHGTATFMI…REFAESIGFT (218 aa)) enclose the Radical SAM core domain.

Belongs to the radical SAM superfamily. Lipoyl synthase family. [4Fe-4S] cluster is required as a cofactor.

It is found in the cytoplasm. The enzyme catalyses [[Fe-S] cluster scaffold protein carrying a second [4Fe-4S](2+) cluster] + N(6)-octanoyl-L-lysyl-[protein] + 2 oxidized [2Fe-2S]-[ferredoxin] + 2 S-adenosyl-L-methionine + 4 H(+) = [[Fe-S] cluster scaffold protein] + N(6)-[(R)-dihydrolipoyl]-L-lysyl-[protein] + 4 Fe(3+) + 2 hydrogen sulfide + 2 5'-deoxyadenosine + 2 L-methionine + 2 reduced [2Fe-2S]-[ferredoxin]. It participates in protein modification; protein lipoylation via endogenous pathway; protein N(6)-(lipoyl)lysine from octanoyl-[acyl-carrier-protein]: step 2/2. In terms of biological role, catalyzes the radical-mediated insertion of two sulfur atoms into the C-6 and C-8 positions of the octanoyl moiety bound to the lipoyl domains of lipoate-dependent enzymes, thereby converting the octanoylated domains into lipoylated derivatives. This Shewanella sediminis (strain HAW-EB3) protein is Lipoyl synthase.